The following is a 339-amino-acid chain: Small ribosomal subunit biogenesis GTPase RsgA (339 aa).

The region spanning 111-271 (MRGLLKPVAA…LIDSPGIREF (161 aa)) is the CP-type G domain. GTP-binding positions include 159-162 (NKAD) and 213-221 (GQSGVGKSS). Zn(2+)-binding residues include Cys295, Cys300, His302, and Cys308.

It belongs to the TRAFAC class YlqF/YawG GTPase family. RsgA subfamily. As to quaternary structure, monomer. Associates with 30S ribosomal subunit, binds 16S rRNA. Zn(2+) is required as a cofactor.

The protein resides in the cytoplasm. Its function is as follows. One of several proteins that assist in the late maturation steps of the functional core of the 30S ribosomal subunit. Helps release RbfA from mature subunits. May play a role in the assembly of ribosomal proteins into the subunit. Circularly permuted GTPase that catalyzes slow GTP hydrolysis, GTPase activity is stimulated by the 30S ribosomal subunit. In Pseudomonas aeruginosa (strain LESB58), this protein is Small ribosomal subunit biogenesis GTPase RsgA.